The sequence spans 234 residues: Small ribosomal subunit protein uS2c (234 aa).

This sequence belongs to the universal ribosomal protein uS2 family.

The protein localises to the plastid. It is found in the chloroplast. This chain is Small ribosomal subunit protein uS2c (rps2), found in Pinus thunbergii (Japanese black pine).